The following is a 479-amino-acid chain: Glutamyl-tRNA(Gln) amidotransferase subunit A (479 aa).

Catalysis depends on charge relay system residues Lys-75 and Ser-150. Ser-174 (acyl-ester intermediate) is an active-site residue.

Belongs to the amidase family. GatA subfamily. Heterotrimer of A, B and C subunits.

It catalyses the reaction L-glutamyl-tRNA(Gln) + L-glutamine + ATP + H2O = L-glutaminyl-tRNA(Gln) + L-glutamate + ADP + phosphate + H(+). In terms of biological role, allows the formation of correctly charged Gln-tRNA(Gln) through the transamidation of misacylated Glu-tRNA(Gln) in organisms which lack glutaminyl-tRNA synthetase. The reaction takes place in the presence of glutamine and ATP through an activated gamma-phospho-Glu-tRNA(Gln). The polypeptide is Glutamyl-tRNA(Gln) amidotransferase subunit A (Synechococcus elongatus (strain ATCC 33912 / PCC 7942 / FACHB-805) (Anacystis nidulans R2)).